The chain runs to 151 residues: Myosin catalytic light chain, smooth muscle (151 aa).

The residue at position 1 (Ala-1) is an N-acetylalanine. 3 EF-hand domains span residues 6 to 41, 83 to 118, and 119 to 151; these read DRITECQEAFELFDRSAEGKVFLGQVGDILRALGQN, GSYEDFVEGLRVFDKENNGKIMGAELRHVLSTLGEK, and MSEEEVEESLLQGQQDPNGCIHYEEFSKYLLEG.

In molluscan muscle, calcium regulation is associated with myosin rather than with actin. Muscle myosin contains two types of light chains: the catalytic light chain, essential for ATPase activity, and the regulatory light chain, a calcium-binding protein responsible for Ca(2+) dependent binding and Ca(2+) dependent Mg-ATPase activity. In Halocynthia roretzi (Sea squirt), this protein is Myosin catalytic light chain, smooth muscle.